The sequence spans 535 residues: Bifunctional purine biosynthesis protein PurH (535 aa).

Residues 1–145 form the MGS-like domain; sequence MAQTALISVS…KNWKDVGVLT (145 aa).

This sequence belongs to the PurH family.

The enzyme catalyses (6R)-10-formyltetrahydrofolate + 5-amino-1-(5-phospho-beta-D-ribosyl)imidazole-4-carboxamide = 5-formamido-1-(5-phospho-D-ribosyl)imidazole-4-carboxamide + (6S)-5,6,7,8-tetrahydrofolate. It catalyses the reaction IMP + H2O = 5-formamido-1-(5-phospho-D-ribosyl)imidazole-4-carboxamide. Its pathway is purine metabolism; IMP biosynthesis via de novo pathway; 5-formamido-1-(5-phospho-D-ribosyl)imidazole-4-carboxamide from 5-amino-1-(5-phospho-D-ribosyl)imidazole-4-carboxamide (10-formyl THF route): step 1/1. It functions in the pathway purine metabolism; IMP biosynthesis via de novo pathway; IMP from 5-formamido-1-(5-phospho-D-ribosyl)imidazole-4-carboxamide: step 1/1. This chain is Bifunctional purine biosynthesis protein PurH, found in Variovorax paradoxus (strain S110).